We begin with the raw amino-acid sequence, 1315 residues long: Serine-aspartate repeat-containing protein D (1315 aa).

An N-terminal signal peptide occupies residues 1-35; the sequence is MLNRENKTAITRKGMVSNRLNKFSIRKYTVGTASI. The YSIRK-G/S signaling motif signature appears at 23 to 34; sequence FSIRKYTVGTAS. The segment at 36 to 568 is ligand binding A region; the sequence is LVGTTLIFGL…NNQSGGAGQE (533 aa). The segment at 54-185 is disordered; the sequence is ESTNKELNEA…NKKVDAKTES (132 aa). Composition is skewed to polar residues over residues 62-71 and 94-108; these read EATTSASDNQ and EMVSSQGNETTSNGN. Residues 130-145 show a composition bias toward basic and acidic residues; sequence KSDEQASPKSTNEDLN. Polar residues-rich tracts occupy residues 146–155 and 163–173; these read TKQTISNQEA and NKSVVNVQPTN. A compositionally biased stretch (basic and acidic residues) spans 174–183; it reads EENKKVDAKT. 5 consecutive CNA-B domains span residues 569-680, 681-791, 792-901, 902-1012, and 1013-1123; these read VYKI…IYKP, KYNL…YKTP, KYNL…FYKP, TYNL…YKTP, and KYSL…EEET. Disordered regions lie at residues 857–883, 972–992, and 1078–1291; these read ETPSGYTPTQVGSGTDEGIDSNGTSTT, YTPTSVTSGNDTEKDSNGLTT, and EKPA…SNNA. 2 stretches are compositionally biased toward polar residues: residues 860 to 869 and 972 to 981; these read SGYTPTQVGS and YTPTSVTSGN. Acidic residues-rich tracts occupy residues 1091 to 1101, 1118 to 1134, 1142 to 1164, and 1172 to 1254; these read TEDDKDADGGE, YYEEETSDSDSDSDSDS, SDSDSDSDSDSDSDSDSDSDSDS, and SDSD…DSDS. The LPXTG sorting signal signature appears at 1278-1282; the sequence is LPETG. Threonine 1281 is subject to Pentaglycyl murein peptidoglycan amidated threonine. Positions 1282 to 1315 are cleaved as a propeptide — removed by sortase; sequence GNENSGSNNATLFGGLFAALGSLLLFGRRKKQNK.

The protein belongs to the serine-aspartate repeat-containing protein (SDr) family. In terms of assembly, interacts with host DSG1; this interaction increases S.aureus adherence to keratinocytes. Anchored to the cell wall by sortase A.

The protein resides in the secreted. Its subcellular location is the cell wall. In terms of biological role, cell surface-associated calcium-binding protein which plays an important role in adhesion and pathogenesis. Mediates interactions with components of the extracellular matrix such as host DSG1 to promote bacterial adhesion to host cells. Contributes to the resistance to killing by innate immune components such as neutrophils present in blood and thus attenuates bacterial clearance. This is Serine-aspartate repeat-containing protein D (sdrD) from Staphylococcus aureus (strain Newman).